The primary structure comprises 127 residues: Gamma-synuclein (127 aa).

2 consecutive repeat copies span residues 20-30 and 31-41. Residues 20 to 67 are 4 X 11 AA tandem repeats of [EGSA]-K-T-K-[EQ]-[GQ]-V-X(4); the sequence is EKTKQGVTEAAEKTKEGVMYVGAKTKEGVVQSVTSVAEKTKEQANAVS. The 3; approximate repeat unit spans residues 42-56; that stretch reads AKTKEGVVQSVTSVA. The stretch at 57–67 is repeat 4; sequence EKTKEQANAVS. Ser67, Ser72, and Ser124 each carry phosphoserine. The tract at residues 99 to 127 is disordered; sequence ALKQPVPSQEDEAAKAEEQVAEETKSGGD. The segment covering 110–127 has biased composition (basic and acidic residues); that stretch reads EAAKAEEQVAEETKSGGD.

The protein belongs to the synuclein family. May be a centrosome-associated protein. Interacts with MYOC; affects its secretion and its aggregation. In terms of processing, phosphorylated by BARK1 and GRK5. In terms of tissue distribution, predominantly expressed in retina (predominantly in outer nuclear layer, also in inner segment of photoreceptor cells, some individual cells located in the inner nuclear layer, inner plexiform layer and in nerve fiber layer). Also found in brain and heart.

The protein resides in the cytoplasm. It is found in the perinuclear region. The protein localises to the cytoskeleton. Its subcellular location is the microtubule organizing center. It localises to the centrosome. The protein resides in the spindle. Plays a role in neurofilament network integrity. May be involved in modulating axonal architecture during development and in the adult. In vitro, increases the susceptibility of neurofilament-H to calcium-dependent proteases. May also function in modulating the keratin network in skin. Activates the MAPK and Elk-1 signal transduction pathway. This chain is Gamma-synuclein (SNCG), found in Bos taurus (Bovine).